The primary structure comprises 133 residues: Ribosome-binding factor A (133 aa).

The protein belongs to the RbfA family. As to quaternary structure, monomer. Binds 30S ribosomal subunits, but not 50S ribosomal subunits or 70S ribosomes.

It localises to the cytoplasm. Functionally, one of several proteins that assist in the late maturation steps of the functional core of the 30S ribosomal subunit. Associates with free 30S ribosomal subunits (but not with 30S subunits that are part of 70S ribosomes or polysomes). Required for efficient processing of 16S rRNA. May interact with the 5'-terminal helix region of 16S rRNA. The polypeptide is Ribosome-binding factor A (Salmonella typhi).